A 1742-amino-acid chain; its full sequence is Kinase non-catalytic C-lobe domain-containing protein 1 (1742 aa).

The KIND 1 domain maps to 37-217 (VSLADILSLR…QELSENTWRG (181 aa)). 2 disordered regions span residues 215–288 (WRGR…EGLA) and 365–455 (FKTQ…TEQS). Ser267 carries the post-translational modification Phosphoserine. Positions 403–412 (LEASSPSQGS) are enriched in polar residues. Over residues 426-445 (DSDHEGHIPRSEEKIPEESR) the composition is skewed to basic and acidic residues. In terms of domain architecture, KIND 2 spans 456–620 (LSLKDLLSKL…RASTCKVHPE (165 aa)). Disordered regions lie at residues 703-727 (DQLALPSESNEKPKEGSGHLDREGT), 744-876 (SNQL…KMTA), 948-1006 (GPAS…LSDI), and 1028-1076 (VTRE…ASDF). The segment covering 711-727 (SNEKPKEGSGHLDREGT) has biased composition (basic and acidic residues). Positions 755–771 (GATPDPDGDSGSPSSAT) are enriched in low complexity. Positions 782–791 (VTQQKGTSGT) are enriched in polar residues. Over residues 847-861 (SDGHPEKPRPADRKL) the composition is skewed to basic and acidic residues. The segment covering 949–965 (PASPSESTSEEPGSQPE) has biased composition (low complexity). Position 951 is a phosphoserine (Ser951). Polar residues predominate over residues 1043–1053 (GPSQDSTSHAS). The stretch at 1112 to 1177 (HTELEAQSPE…EMKSKVQFLS (66 aa)) forms a coiled coil. The region spanning 1239 to 1367 (KARILQAGTP…ALLEVGTERR (129 aa)) is the N-terminal Ras-GEF domain. The region spanning 1461 to 1712 (STNQLFTQLT…SGADVSILAA (252 aa)) is the Ras-GEF domain.

As to quaternary structure, interacts (via KIND2) with MAP2; the interaction enhances MAP2 phosphorylation and localizes KNDC1 to dendrites. Highly expressed in the brain and at low levels in the ovary. In the brain it is most prominently expressed in the cerebellum where it is restricted to the granular Purkinje cell layer.

It localises to the cell projection. Its subcellular location is the dendrite. It is found in the perikaryon. RAS-Guanine nucleotide exchange factor (GEF) that controls the negative regulation of neuronal dendrite growth by mediating a signaling pathway linking RAS and MAP2. May be involved in cellular senescence. This is Kinase non-catalytic C-lobe domain-containing protein 1 from Mus musculus (Mouse).